We begin with the raw amino-acid sequence, 971 residues long: Reversion-inducing cysteine-rich protein with Kazal motifs (971 aa).

Positions 1–22 (MASVRASPRSALLLLLAAAGVA) are cleaved as a signal peptide. The Knot 1 repeat unit spans residues 37 to 84 (CCNHSKDNQMCRDVCEQIFSSKSESRLKHLLQRAPDYCPETMVEIWSC). Residues 37 to 338 (CCNHSKDNQM…NPVEVSMLTC (302 aa)) are 5 X Knot repeats. Residues Asn-39 and Asn-86 are each glycosylated (N-linked (GlcNAc...) asparagine). Knot repeat units follow at residues 104 to 141 (CCEL…LFSC) and 151 to 197 (CCSY…LIHC). Asn-200 is a glycosylation site (N-linked (GlcNAc...) asparagine). 2 Knot repeats span residues 216-263 (CCDR…LWQC) and 292-338 (CCSK…MLTC). N-linked (GlcNAc...) asparagine glycans are attached at residues Asn-297 and Asn-352. 3 Kazal-like domains span residues 627-673 (TFTG…PCIS), 698-752 (TFDK…PCQP), and 753-789 (FCRA…PCQA). Intrachain disulfides connect Cys-633–Cys-658, Cys-635–Cys-654, Cys-643–Cys-671, Cys-716–Cys-735, Cys-724–Cys-750, and Cys-761–Cys-787. In terms of domain architecture, Kazal-like 2; degenerate spans 704–750 (CSQYECVPRQLTCDQARDPVCDTDHMEHSNLCTLYQRGKSLSYRGPC). Residue Ser-942 is the site of GPI-anchor amidated serine attachment. A propeptide spans 943-971 (SAVVGRPLFHSLLLLLSLGLTVHLLWTRP) (removed in mature form).

The protein belongs to the RECK family. Interacts (via knot repeats) with WNT7A (via disordered linker region); the interaction is direct. Interacts (via knot repeats) with WNT7B (via disordered linker region); the interaction is direct. Interacts with ADGRA2; the interaction is direct. Interacts with MMP9.

The protein resides in the cell membrane. Functions together with ADGRA2 to enable brain endothelial cells to selectively respond to Wnt7 signals (WNT7A or WNT7B). Plays a key role in Wnt7-specific responses: required for central nervous system (CNS) angiogenesis and blood-brain barrier regulation. Acts as a Wnt7-specific coactivator of canonical Wnt signaling by decoding Wnt ligands: acts by interacting specifically with the disordered linker region of Wnt7, thereby conferring ligand selectivity for Wnt7. ADGRA2 is then required to deliver RECK-bound Wnt7 to frizzled by assembling a higher-order RECK-ADGRA2-Fzd-LRP5-LRP6 complex. Also acts as a serine protease inhibitor: negatively regulates matrix metalloproteinase-9 (MMP9) by suppressing MMP9 secretion and by direct inhibition of its enzymatic activity. Also inhibits metalloproteinase activity of MMP2 and MMP14 (MT1-MMP). In Mus musculus (Mouse), this protein is Reversion-inducing cysteine-rich protein with Kazal motifs.